A 280-amino-acid chain; its full sequence is Putative S-adenosyl-L-methionine-dependent methyltransferase FRAAL3836 (280 aa).

Residues D121 and 150 to 151 (DL) each bind S-adenosyl-L-methionine.

It belongs to the UPF0677 family.

Exhibits S-adenosyl-L-methionine-dependent methyltransferase activity. The chain is Putative S-adenosyl-L-methionine-dependent methyltransferase FRAAL3836 from Frankia alni (strain DSM 45986 / CECT 9034 / ACN14a).